We begin with the raw amino-acid sequence, 363 residues long: tRNA/tmRNA (uracil-C(5))-methyltransferase (363 aa).

S-adenosyl-L-methionine-binding residues include Gln-187, Tyr-215, Asn-220, Glu-236, and Asp-296. Cys-321 functions as the Nucleophile in the catalytic mechanism. Glu-355 (proton acceptor) is an active-site residue.

This sequence belongs to the class I-like SAM-binding methyltransferase superfamily. RNA M5U methyltransferase family. TrmA subfamily.

It carries out the reaction uridine(54) in tRNA + S-adenosyl-L-methionine = 5-methyluridine(54) in tRNA + S-adenosyl-L-homocysteine + H(+). The catalysed reaction is uridine(341) in tmRNA + S-adenosyl-L-methionine = 5-methyluridine(341) in tmRNA + S-adenosyl-L-homocysteine + H(+). Its function is as follows. Dual-specificity methyltransferase that catalyzes the formation of 5-methyluridine at position 54 (m5U54) in all tRNAs, and that of position 341 (m5U341) in tmRNA (transfer-mRNA). This is tRNA/tmRNA (uracil-C(5))-methyltransferase from Haemophilus influenzae (strain 86-028NP).